Here is a 223-residue protein sequence, read N- to C-terminus: MNIAKLIDHTILKANATKEDVMKVIEEAKEYKFASVCINPTWVKLAAEELAGHDVDVCTVIGFPLGASTTETKAFETKDAIAKGATEVDMVINVGALKDGDDELVEKDIYEVVQAAKGKALVKVIIETCLLTDEEKVRACELSVKAGADFVKTSTGFSTGGATAEDIALMRKTVGPNVGVKASGGVRTREDADKMVAAGASRIGASASVAIVLNDAKDATDNY.

D89 functions as the Proton donor/acceptor in the catalytic mechanism. Catalysis depends on K152, which acts as the Schiff-base intermediate with acetaldehyde. Residue K181 is the Proton donor/acceptor of the active site.

This sequence belongs to the DeoC/FbaB aldolase family. DeoC type 1 subfamily.

The protein localises to the cytoplasm. The catalysed reaction is 2-deoxy-D-ribose 5-phosphate = D-glyceraldehyde 3-phosphate + acetaldehyde. The protein operates within carbohydrate degradation; 2-deoxy-D-ribose 1-phosphate degradation; D-glyceraldehyde 3-phosphate and acetaldehyde from 2-deoxy-alpha-D-ribose 1-phosphate: step 2/2. Catalyzes a reversible aldol reaction between acetaldehyde and D-glyceraldehyde 3-phosphate to generate 2-deoxy-D-ribose 5-phosphate. This is Deoxyribose-phosphate aldolase from Bacillus cereus (strain AH187).